The primary structure comprises 412 residues: FAD-dependent monooxygenase nscC (412 aa).

The signal sequence occupies residues 1–21 (MGKPQETILIIGAGIAGLTAS). 2 residues coordinate FAD: E35 and A46. 2 N-linked (GlcNAc...) asparagine glycosylation sites follow: N68 and N92. R119 is a binding site for FAD. N-linked (GlcNAc...) asparagine glycosylation is found at N170, N231, and N251. Positions 326 and 339 each coordinate FAD.

The protein belongs to the paxM FAD-dependent monooxygenase family. It depends on FAD as a cofactor.

The protein operates within secondary metabolite biosynthesis. Functionally, FAD-dependent monooxygenase; part of the gene cluster that mediates the biosynthesis of neosartoricin B, a prenylated anthracenone that probably exhibits T-cell antiproliferative activity, suggestive of a physiological role as an immunosuppressive agent. The non-reducing polyketide synthase nscA probably synthesizes and cyclizes the decaketide backbone. The hydrolase nscB then mediates the product release through hydrolysis followed by spontaneous decarboxylation. The prenyltransferase nscD catalyzes the addition of the dimethylallyl group to the aromatic C5. The FAD-dependent monooxygenase nscC is then responsible for the stereospecific hydroxylation at C2. Neosartoricin B can be converted into two additional compounds neosartoricins C and D. Neosartoricin C is a spirocyclic compound that is cyclized through the attack of C3 hydroxyl on C14, followed by dehydration. On the other hand, neosartoricin D is a further cyclized compound in which attack of C2 on C14 in neosartoricin C results in the formation of the acetal-containing dioxabicyclo-octanone ring. Both of these compounds are novel and possibly represent related metabolites of the gene cluster. This Trichophyton rubrum (strain ATCC MYA-4607 / CBS 118892) (Athlete's foot fungus) protein is FAD-dependent monooxygenase nscC.